A 404-amino-acid chain; its full sequence is S-adenosylmethionine synthase (404 aa).

Residue His17 participates in ATP binding. Asp19 lines the Mg(2+) pocket. Residue Glu45 participates in K(+) binding. Positions 58 and 101 each coordinate L-methionine. A flexible loop region spans residues 101-111; the sequence is QSADINRGVDR. ATP contacts are provided by residues 172–174, 245–246, Asp254, 260–261, Ala277, and Lys281; these read DAK, RF, and RK. Asp254 lines the L-methionine pocket. Lys285 provides a ligand contact to L-methionine.

Belongs to the AdoMet synthase family. As to quaternary structure, homotetramer; dimer of dimers. It depends on Mg(2+) as a cofactor. K(+) is required as a cofactor.

Its subcellular location is the cytoplasm. The catalysed reaction is L-methionine + ATP + H2O = S-adenosyl-L-methionine + phosphate + diphosphate. It participates in amino-acid biosynthesis; S-adenosyl-L-methionine biosynthesis; S-adenosyl-L-methionine from L-methionine: step 1/1. In terms of biological role, catalyzes the formation of S-adenosylmethionine (AdoMet) from methionine and ATP. The overall synthetic reaction is composed of two sequential steps, AdoMet formation and the subsequent tripolyphosphate hydrolysis which occurs prior to release of AdoMet from the enzyme. The protein is S-adenosylmethionine synthase of Chlorobium luteolum (strain DSM 273 / BCRC 81028 / 2530) (Pelodictyon luteolum).